Consider the following 1503-residue polypeptide: ATP-binding cassette sub-family C member 6 (1503 aa).

The Extracellular portion of the chain corresponds to 1–31 (MAAPAEPCAGQGVWNQTEPEPAATSLLSLCF). Asn15 carries N-linked (GlcNAc...) asparagine glycosylation. A helical membrane pass occupies residues 32 to 52 (LRTAGVWVPPMYLWVLGPIYL). At 53–72 (LFIHHHGRGYLRMSPLFKAK) the chain is on the cytoplasmic side. Residues 73–93 (MVLGFALIVLCTSSVAVALWK) traverse the membrane as a helical segment. Over 94–98 (IQQGT) the chain is Extracellular. Residues 99–119 (PEAPEFLIHPTVWLTTMSFAV) traverse the membrane as a helical segment. Residues 120–131 (FLIHTERKKGVQ) lie on the Cytoplasmic side of the membrane. The chain crosses the membrane as a helical span at residues 132–149 (SSGVLFGYWLLCFVLPAT). At 150 to 167 (NAAQQASGAGFQSDPVRH) the chain is on the extracellular side. Residues 168–188 (LSTYLCLSLVVAQFVLSCLAD) traverse the membrane as a helical segment. The Cytoplasmic portion of the chain corresponds to 189 to 302 (QPPFFPEDPQ…GSQWRPLLKA (114 aa)). The helical transmembrane segment at 303–323 (IWQVFHSTFLLGTLSLIISDV) threads the bilayer. Positions 311–593 (FLLGTLSLII…LPFSIHSLVQ (283 aa)) constitute an ABC transmembrane type-1 1 domain. Topologically, residues 324-349 (FRFTVPKLLSLFLEFIGDPKPPAWKG) are extracellular. A helical membrane pass occupies residues 350-370 (YLLAVLMFLSACLQTLFEQQN). Over 371–426 (MYRLKVLQMRLRSAITGLVYRKVLALSSGSRKASAVGDVVNLVSVDVQRLTESVLY) the chain is Cytoplasmic. Residues 427-447 (LNGLWLPLVWIVVCFVYLWQL) traverse the membrane as a helical segment. The Extracellular portion of the chain corresponds to 448 to 450 (LGP). A helical transmembrane segment spans residues 451-471 (SALTAIAVFLSLLPLNFFISK). Residues 472–533 (KRNHHQEEQM…ALRTSGLLFS (62 aa)) are Cytoplasmic-facing. A helical transmembrane segment spans residues 534 to 554 (VSLVSFQVSTFLVALVVFAVH). At 555 to 575 (TLVAENAMNAEKAFVTLTVLN) the chain is on the extracellular side. The chain crosses the membrane as a helical span at residues 576–596 (ILNKAQAFLPFSIHSLVQARV). At 597-939 (SFDRLVTFLC…VKATVHLAYL (343 aa)) the chain is on the cytoplasmic side. Residues 629–853 (ITIHSATFAW…KGALMCLLDQ (225 aa)) form the ABC transporter 1 domain. Position 663–670 (663–670 (GPVGAGKS)) interacts with ATP. Residues 854 to 919 (ARQPGDRGEG…LDDPDRAGWP (66 aa)) form a disordered region. The segment covering 881 to 901 (RRPELRRERSIKSVPEKDRTT) has biased composition (basic and acidic residues). Residues 940–960 (RAVGTPLCLYALFLFLCQQVA) traverse the membrane as a helical segment. In terms of domain architecture, ABC transmembrane type-1 2 spans 947-1228 (CLYALFLFLC…VVRNWTDLEN (282 aa)). The Extracellular segment spans residues 961–997 (SFCRGYWLSLWADDPAVGGQQTQAALRGGIFGLLGCL). The helical transmembrane segment at 998-1018 (QAIGLFASMAAVLLGGARASR) threads the bilayer. At 1019 to 1061 (LLFQRLLWDVVRSPISFFERTPIGHLLNRFSKETDTVDVDIPD) the chain is on the cytoplasmic side. The chain crosses the membrane as a helical span at residues 1062-1082 (KLRSLLMYAFGLLEVSLVVAV). Ala1083 is a topological domain (extracellular). Residues 1084-1104 (TPLATVAILPLFLLYAGFQSL) traverse the membrane as a helical segment. The Cytoplasmic segment spans residues 1105–1175 (YVVSSCQLRR…VADRWLAANV (71 aa)). A helical transmembrane segment spans residues 1176–1196 (ELLGNGLVFAAATCAVLSKAH). At 1197-1198 (LS) the chain is on the extracellular side. The helical transmembrane segment at 1199–1219 (AGLVGFSVSAALQVTQTLQWV) threads the bilayer. The Cytoplasmic portion of the chain corresponds to 1220–1503 (VRNWTDLENS…YRLAQESGLV (284 aa)). One can recognise an ABC transporter 2 domain in the interval 1265 to 1499 (IEFRDFGLRY…KGLFYRLAQE (235 aa)). Ser1286 bears the Phosphoserine mark. 1299–1306 (GRTGAGKS) is a binding site for ATP.

Belongs to the ABC transporter superfamily. ABCC family. Conjugate transporter (TC 3.A.1.208) subfamily. It depends on Mg(2+) as a cofactor. Glycosylated. As to expression, expressed in kidney and liver. Very low expression in other tissues. In testis, localized to peritubular myoid cells, Leydig cells, along the basal membrane of Sertoli cells and moderately in the adluminal compartment of the seminiferous tubules.

It localises to the basal cell membrane. It is found in the basolateral cell membrane. The protein resides in the endoplasmic reticulum membrane. The catalysed reaction is an S-substituted glutathione(in) + ATP + H2O = an S-substituted glutathione(out) + ADP + phosphate + H(+). It catalyses the reaction leukotriene C4(in) + ATP + H2O = leukotriene C4(out) + ADP + phosphate + H(+). LTC4 transport is completely inhibited by 1 mM orthovanadate. Its function is as follows. ATP-dependent transporter of the ATP-binding cassette (ABC) family that actively extrudes physiological compounds, and xenobiotics from cells. Mediates ATP-dependent transport of glutathione conjugates such as leukotriene-c4 (LTC4) and N-ethylmaleimide S-glutathione (NEM-GS) (in vitro), and an anionic cyclopentapeptide endothelin antagonist, BQ-123. May contribute to regulate the transport of organic compounds in testes across the blood-testis-barrier. Does not appear to actively transport drugs outside the cell. Confers low levels of cellular resistance to etoposide, teniposide, anthracyclines and cisplatin. Mediates the release of nucleoside triphosphates, predominantly ATP, into the circulation, where it is rapidly converted into AMP and the mineralization inhibitor inorganic pyrophosphate (PPi) by the ecto-enzyme ectonucleotide pyrophosphatase phosphodiesterase 1 (ENPP1), therefore playing a role in PPi homeostasis. In terms of biological role, inhibits TNF-alpha-mediated apoptosis through blocking one or more caspases. This chain is ATP-binding cassette sub-family C member 6 (ABCC6), found in Homo sapiens (Human).